The sequence spans 303 residues: Glutamyl-Q tRNA(Asp) synthetase (303 aa).

L-glutamate-binding positions include 9–13 and E45; that span reads RFAPS. A 'HIGH' region motif is present at residues 12–22; the sequence is PSPSGSLHFGS. Zn(2+) is bound by residues C101, C103, Y115, and C119. L-glutamate is bound by residues Y172 and R190. The 'KMSKS' region signature appears at 228 to 232; sequence KLSKQ. Residue K231 coordinates ATP.

It belongs to the class-I aminoacyl-tRNA synthetase family. GluQ subfamily. It depends on Zn(2+) as a cofactor.

In terms of biological role, catalyzes the tRNA-independent activation of glutamate in presence of ATP and the subsequent transfer of glutamate onto a tRNA(Asp). Glutamate is transferred on the 2-amino-5-(4,5-dihydroxy-2-cyclopenten-1-yl) moiety of the queuosine in the wobble position of the QUC anticodon. The polypeptide is Glutamyl-Q tRNA(Asp) synthetase (Serratia proteamaculans (strain 568)).